A 320-amino-acid polypeptide reads, in one-letter code: GPI-specific phospholipase A2-like PGAP3 (320 aa).

A signal peptide spans 1–20; it reads MAGLAARLVLLAGAAALASG. Residues 21 to 98 are Lumenal-facing; it reads SQGDREPVYR…QFHGKWPFSR (78 aa). The N-linked (GlcNAc...) asparagine glycan is linked to N40. The helical transmembrane segment at 99–119 threads the bilayer; it reads FLFFQEPASAVASFLNGLASL. The Cytoplasmic portion of the chain corresponds to 120–135; sequence VMLCRYRTFVPASSPM. Residues 136–156 form a helical membrane-spanning segment; it reads YHTCVAFAWVSLNAWFWSTVF. At 157 to 169 the chain is on the lumenal side; that stretch reads HTRDTDLTEKMDY. A helical membrane pass occupies residues 170 to 190; the sequence is FCASTVILHSIYLCCVRTVGL. Over 191–193 the chain is Cytoplasmic; sequence QHP. A helical transmembrane segment spans residues 194-214; sequence AVVSAFRALLLLMLTVHVSYL. The Lumenal portion of the chain corresponds to 215–224; that stretch reads SLIRFDYGYN. A helical transmembrane segment spans residues 225–245; it reads LVANVAIGLVNVVWWLAWCLW. Over 246-257 the chain is Cytoplasmic; that stretch reads NQRRLPHVRKCV. The chain crosses the membrane as a helical span at residues 258–278; sequence VVVLLLQGLSLLELLDFPPLF. W279 is a topological domain (lumenal). The helical transmembrane segment at 280-299 threads the bilayer; that stretch reads VLDAHAIWHISTIPVHVLFF. Residues 300 to 320 are Cytoplasmic-facing; that stretch reads SFLEDDSLYLLKESEDKFKLD.

Belongs to the PGAP3 family. Ubiquitously expressed, with highest levels in thyroid and placenta.

The protein localises to the golgi apparatus membrane. Functionally, involved in the fatty acid remodeling steps of GPI-anchor maturation where the unsaturated acyl chain at sn-2 of inositol phosphate is replaced by a saturated stearoyl chain. May catalyze the first step of the fatty acid remodeling, by removing the unsaturated acyl chain at sn-2 of inositol phosphate, generating a lyso-GPI intermediate. The fatty acid remodeling steps is critical for the integration of GPI-APs into lipid rafts. This is GPI-specific phospholipase A2-like PGAP3 from Homo sapiens (Human).